Consider the following 91-residue polypeptide: Acylphosphatase (91 aa).

The Acylphosphatase-like domain maps to 3 to 91 (CLRAIVKGKV…ANYSDFRIKH (89 aa)). Active-site residues include arginine 18 and asparagine 36.

Belongs to the acylphosphatase family.

The catalysed reaction is an acyl phosphate + H2O = a carboxylate + phosphate + H(+). This is Acylphosphatase (acyP) from Dehalococcoides mccartyi (strain CBDB1).